The primary structure comprises 291 residues: MPELPEVETVRRGLEPVITGAKIISITLNRRDLRFPFPEAFSERLVGRTIMELGRRGKYLLFHLSQNETILSHLGMSGSWRIEDDLLRKTYSAAGKFVKHDHFLMDIQAKDGKVYHLTYNDVRRFGFMLLLDTNRIYEHPLLKKLGLEPLSNEFSGRYLQEAFVNKKISLKGVLLDQSIIAGLGNIYVCEALWRSRLSPQRGAFTLALKTVCAREFADSLAQNIRNVIAEAISFGGSTLRDYIRTDGSLGYFQHSFSVYGREGKECFQCGIPITRISQSGRSSFYCSQCQK.

Proline 2 acts as the Schiff-base intermediate with DNA in catalysis. Glutamate 3 serves as the catalytic Proton donor. Residue lysine 58 is the Proton donor; for beta-elimination activity of the active site. DNA-binding residues include histidine 100, arginine 123, and lysine 166. Residues 257–291 (SVYGREGKECFQCGIPITRISQSGRSSFYCSQCQK) form an FPG-type zinc finger. Arginine 281 (proton donor; for delta-elimination activity) is an active-site residue.

It belongs to the FPG family. Monomer. The cofactor is Zn(2+).

The enzyme catalyses Hydrolysis of DNA containing ring-opened 7-methylguanine residues, releasing 2,6-diamino-4-hydroxy-5-(N-methyl)formamidopyrimidine.. It catalyses the reaction 2'-deoxyribonucleotide-(2'-deoxyribose 5'-phosphate)-2'-deoxyribonucleotide-DNA = a 3'-end 2'-deoxyribonucleotide-(2,3-dehydro-2,3-deoxyribose 5'-phosphate)-DNA + a 5'-end 5'-phospho-2'-deoxyribonucleoside-DNA + H(+). Functionally, involved in base excision repair of DNA damaged by oxidation or by mutagenic agents. Acts as a DNA glycosylase that recognizes and removes damaged bases. Has a preference for oxidized purines, such as 7,8-dihydro-8-oxoguanine (8-oxoG). Has AP (apurinic/apyrimidinic) lyase activity and introduces nicks in the DNA strand. Cleaves the DNA backbone by beta-delta elimination to generate a single-strand break at the site of the removed base with both 3'- and 5'-phosphates. The polypeptide is Formamidopyrimidine-DNA glycosylase (Bartonella quintana (strain Toulouse) (Rochalimaea quintana)).